The primary structure comprises 150 residues: MDSLDEEQIGALQKAFDSFDTDSKGFITPETVGVILRMMGVKISEKNLQEVIAETDEDGSGELEFEEFVELAAKFLIEEDEEALKTELREAFRVYDKEGNGYITTDVLKEILRELDNRLTEEDLDSIIEEVDEDGSGTLDFNEFMEMMNG.

Residue methionine 1 is modified to N-acetylmethionine. EF-hand domains are found at residues 7-42 (EQIG…MGVK), 43-78 (ISEK…FLIE), 83-118 (ALKT…LDNR), and 119-150 (LTEE…MMNG). Ca(2+)-binding residues include aspartate 56, aspartate 58, serine 60, glutamate 62, and glutamate 67. Ca(2+)-binding residues include aspartate 132, aspartate 134, serine 136, threonine 138, and glutamate 143.

It belongs to the troponin C family.

Troponin is the central regulatory protein of striated muscle contraction. Tn consists of three components: Tn-I which is the inhibitor of actomyosin ATPase, Tn-T which contains the binding site for tropomyosin and Tn-C. The binding of calcium to Tn-C abolishes the inhibitory action of Tn on actin filaments. The chain is Troponin C, isoform 2A from Homarus americanus (American lobster).